The sequence spans 442 residues: C4-dicarboxylate transport protein (442 aa).

8 consecutive transmembrane segments (helical) span residues 19–39, 55–75, 90–110, 161–181, 199–219, 232–252, 318–338, and 366–386; these read QLYF…HFEP, LVKM…IAGM, AYFL…AHVV, ILQV…VGDA, LVGI…AFTI, WLVG…LGFV, IYMT…LTLG, and AATL…ILGV.

It belongs to the dicarboxylate/amino acid:cation symporter (DAACS) (TC 2.A.23) family.

Its subcellular location is the cell inner membrane. Functionally, responsible for the transport of dicarboxylates such as succinate, fumarate, and malate from the periplasm across the membrane. In Delftia acidovorans (strain DSM 14801 / SPH-1), this protein is C4-dicarboxylate transport protein.